Consider the following 211-residue polypeptide: NADH-quinone oxidoreductase subunit I (211 aa).

Positions 21-41 (PTTEQYPEQKKETAPRFHGRH) are disordered. 4Fe-4S ferredoxin-type domains lie at 43–73 (LNRH…VEGA) and 89–118 (RVYQ…MSND). [4Fe-4S] cluster contacts are provided by cysteine 53, cysteine 56, cysteine 59, cysteine 63, cysteine 98, cysteine 101, cysteine 104, and cysteine 108. Residues 141 to 211 (RAGMESPPHP…AHGAGSERPR (71 aa)) are disordered. The span at 152-166 (RLGESETDYYTRDPD) shows a compositional bias: basic and acidic residues. The segment covering 179-191 (DEADEAGEAGEAG) has biased composition (acidic residues). Basic and acidic residues predominate over residues 192–211 (EAERAADKVPAHGAGSERPR).

It belongs to the complex I 23 kDa subunit family. In terms of assembly, NDH-1 is composed of 14 different subunits. Subunits NuoA, H, J, K, L, M, N constitute the membrane sector of the complex. [4Fe-4S] cluster is required as a cofactor.

Its subcellular location is the cell membrane. The catalysed reaction is a quinone + NADH + 5 H(+)(in) = a quinol + NAD(+) + 4 H(+)(out). NDH-1 shuttles electrons from NADH, via FMN and iron-sulfur (Fe-S) centers, to quinones in the respiratory chain. The immediate electron acceptor for the enzyme in this species is believed to be ubiquinone. Couples the redox reaction to proton translocation (for every two electrons transferred, four hydrogen ions are translocated across the cytoplasmic membrane), and thus conserves the redox energy in a proton gradient. The polypeptide is NADH-quinone oxidoreductase subunit I (Parafrankia sp. (strain EAN1pec)).